Reading from the N-terminus, the 84-residue chain is CDC42 small effector protein 2-A (84 aa).

2 S-palmitoyl cysteine lipidation sites follow: Cys-10 and Cys-11. The CRIB domain maps to 29–42 (IGEPTNFVHTAHVG).

This sequence belongs to the CDC42SE/SPEC family.

It is found in the cytoplasm. Its subcellular location is the cytoskeleton. It localises to the cell membrane. Functionally, probably involved in the organization of the actin cytoskeleton by acting downstream of CDC42, inducing actin filament assembly. The chain is CDC42 small effector protein 2-A (cdc42se2-A) from Xenopus tropicalis (Western clawed frog).